A 339-amino-acid polypeptide reads, in one-letter code: MQQVFFQETEFLNSVIDYDHKVETENLCLDIAYGTDKNFLFGCGISIASILKYNEGSRLCFHIFTDYFGDDDRKYFDALALQYKTRIKIYLINGDRLRSLPSTKNWTHAIYFRFVIADYFINKAPKVLYLDADIICQGTIEPLINFSFPDDKVAMVVTEGQADWWEKRAHSLGVAGIAKGYFNSGFLLINTAQWAAQQVSARAIAMLNEPEIIKKITHPDQDVLNMLLADKLIFADIKYNTQFSLNYQLKESFINPVTNDTIFIHYIGPTKPWHDWAWDYPVSQAFMEAKNASPWKNTALLKPNNSNQLRYSAKHMLKKHRYLKGFSNYLFYFIEKIKH.

Residues 34-39 (GTDKNF) and 131-132 (DA) contribute to the UDP site. 2 residues coordinate Mg(2+): Asp-131 and Asp-133. 2 consecutive short sequence motifs (DXD) follow at residues 131–133 (DAD) and 220–222 (DQD). His-265 provides a ligand contact to Mg(2+). 265 to 271 (HYIGPTK) lines the UDP pocket.

This sequence belongs to the glycosyltransferase 8 family. Mg(2+) is required as a cofactor.

The catalysed reaction is UDP-glucose + lipopolysaccharide = UDP + alpha-D-glucosyl-lipopolysaccharide.. It carries out the reaction alpha-D-Gal-(1-&gt;6)-alpha-D-Glc-(1-&gt;3)-[L-alpha-D-Hep-(1-&gt;7)]-4-O-PO3(2-)-L-alpha-D-Hep-(1-&gt;3)-4-O-PO3(2-)-L-alpha-D-Hep-(1-&gt;5)-[alpha-Kdo-(2-&gt;4)]-alpha-Kdo-(2-&gt;6)-lipid A + UDP-alpha-D-glucose = alpha-D-Glc-(1-&gt;3)-[alpha-D-Gal-(1-&gt;6)]-alpha-D-Glc-(1-&gt;3)-[L-alpha-D-Hep-(1-&gt;7)]-4-O-PO3(2-)-L-alpha-D-Hep-(1-&gt;3)-4-O-PO3(2-)-L-alpha-D-Hep-(1-&gt;5)-[alpha-Kdo-(2-&gt;4)]-alpha-Kdo-(2-&gt;6)-lipid A + UDP + H(+). It participates in bacterial outer membrane biogenesis; LPS core biosynthesis. In terms of biological role, glucosyltransferase involved in the biosynthesis of the core oligosaccharide region of lipopolysaccharide (LPS). Catalyzes the addition of a second glucose (glucose II) to the first outer-core glucose (glucose I). In vitro, can add multiple glucose residues to its lipid acceptor. Activity does not require the branched galactose added by WaaB, but it is higher in the presence of this branched galactose. In the absence of a lipid acceptor, can hydrolyze UDP-glucose, but not UDP-galactose. This chain is Lipopolysaccharide glucosyltransferase WaaO, found in Escherichia coli (strain K12).